The following is a 406-amino-acid chain: Dual-specificity RNA methyltransferase RlmN (406 aa).

Glutamate 119 functions as the Proton acceptor in the catalytic mechanism. Residues 125–370 (DKGRGTLCVS…AMVRRTRGDD (246 aa)) form the Radical SAM core domain. A disulfide bridge links cysteine 132 with cysteine 375. [4Fe-4S] cluster-binding residues include cysteine 139, cysteine 143, and cysteine 146. S-adenosyl-L-methionine contacts are provided by residues 192-193 (GE), serine 224, 246-248 (SLH), and asparagine 332. Cysteine 375 serves as the catalytic S-methylcysteine intermediate.

It belongs to the radical SAM superfamily. RlmN family. The cofactor is [4Fe-4S] cluster.

The protein resides in the cytoplasm. It catalyses the reaction adenosine(2503) in 23S rRNA + 2 reduced [2Fe-2S]-[ferredoxin] + 2 S-adenosyl-L-methionine = 2-methyladenosine(2503) in 23S rRNA + 5'-deoxyadenosine + L-methionine + 2 oxidized [2Fe-2S]-[ferredoxin] + S-adenosyl-L-homocysteine. It carries out the reaction adenosine(37) in tRNA + 2 reduced [2Fe-2S]-[ferredoxin] + 2 S-adenosyl-L-methionine = 2-methyladenosine(37) in tRNA + 5'-deoxyadenosine + L-methionine + 2 oxidized [2Fe-2S]-[ferredoxin] + S-adenosyl-L-homocysteine. Functionally, specifically methylates position 2 of adenine 2503 in 23S rRNA and position 2 of adenine 37 in tRNAs. m2A2503 modification seems to play a crucial role in the proofreading step occurring at the peptidyl transferase center and thus would serve to optimize ribosomal fidelity. This Xylella fastidiosa (strain M12) protein is Dual-specificity RNA methyltransferase RlmN.